Here is a 110-residue protein sequence, read N- to C-terminus: AQVINTFDGVADYLLTYHKLPDNYITKSEAQALGWVASKGNLADVAPGKSIGGDIFSNREGKLPAKSGRTWREADINYTSGFRNSDRILYSSDWLIYKTTDHYKTFTKIR.

Residue glutamate 73 is the Proton acceptor of the active site. Catalysis depends on histidine 102, which acts as the Proton donor.

Belongs to the ribonuclease N1/T1 family.

It is found in the secreted. In terms of biological role, hydrolyzes phosphodiester bonds in RNA, poly- and oligoribonucleotides resulting in 3'-nucleoside monophosphates via 2',3'-cyclophosphate intermediates. This Niallia circulans (Bacillus circulans) protein is Ribonuclease.